A 65-amino-acid polypeptide reads, in one-letter code: Conotoxin Lp5.1 (65 aa).

A signal peptide spans 1 to 22 (MRCVPVFIILLLLIPSAPSVDA). Positions 23–50 (QRKTKDDVPLASFHDNAKRTLKRLWNKR) are excised as a propeptide.

This sequence belongs to the conotoxin T superfamily. In terms of processing, contains 2 disulfide bonds that can be either 'C1-C3, C2-C4' or 'C1-C4, C2-C3', since these disulfide connectivities have been observed for conotoxins with cysteine framework V (for examples, see AC P0DQQ7 and AC P81755). As to expression, expressed by the venom duct.

It is found in the secreted. The polypeptide is Conotoxin Lp5.1 (Conus leopardus (Leopard cone)).